A 146-amino-acid chain; its full sequence is Catabolic 3-dehydroquinase (146 aa).

Tyr24 (proton acceptor) is an active-site residue. Residues Asn78, His84, and Asp91 each contribute to the substrate site. His104 acts as the Proton donor in catalysis. Substrate-binding positions include Ile105–Thr106 and Arg115.

The protein belongs to the type-II 3-dehydroquinase family. As to quaternary structure, homododecamer. Adopts a ring-like structure, composed of an arrangement of two hexameric rings stacked on top of one another.

It catalyses the reaction 3-dehydroquinate = 3-dehydroshikimate + H2O. It functions in the pathway aromatic compound metabolism; 3,4-dihydroxybenzoate biosynthesis; 3,4-dihydroxybenzoate from 3-dehydroquinate: step 1/2. Is involved in the catabolism of quinate. Allows the utilization of quinate as carbon source via the beta-ketoadipate pathway. The protein is Catabolic 3-dehydroquinase of Candida tropicalis (strain ATCC MYA-3404 / T1) (Yeast).